The sequence spans 67 residues: Large ribosomal subunit protein eL24 (67 aa).

Residues C7, C10, C33, and C37 each coordinate Zn(2+). The C4-type zinc finger occupies 7-37 (CSYCGKEFEPGTGKMYVRNDGRVYFFCSRKC).

The protein belongs to the eukaryotic ribosomal protein eL24 family. Part of the 50S ribosomal subunit. Forms a cluster with proteins L3 and L14. Zn(2+) serves as cofactor.

Its function is as follows. Binds to the 23S rRNA. The polypeptide is Large ribosomal subunit protein eL24 (Thermococcus sibiricus (strain DSM 12597 / MM 739)).